The chain runs to 711 residues: Hydroperoxide isomerase ALOXE3 (711 aa).

The 118-residue stretch at 2-119 (AVYRLCVTTG…TVELRPGTAR (118 aa)) folds into the PLAT domain. A Lipoxygenase domain is found at 120–711 (TICQDSLPLL…PPLIENSVSI (592 aa)). Positions 408, 413, 588, 592, and 711 each coordinate Fe cation.

This sequence belongs to the lipoxygenase family. The cofactor is Fe cation. As to expression, skin specific.

It localises to the cytoplasm. The enzyme catalyses a hydroperoxyeicosatetraenoate = a hydroxy-epoxy-eicosatetraenoate. It carries out the reaction (8S)-hydroperoxy-(5Z,9E,11Z,14Z)-eicosatetraenoate = (10R)-hydroxy-(8S,9S)-epoxy-(5Z,11Z,14Z)-eicosatrienoate. It catalyses the reaction (12R)-hydroperoxy-(5Z,8Z,10E,14Z)-eicosatetraenoate = (8R)-hydroxy-(11R,12R)-epoxy-(5Z,9E,14Z)-eicosatrienoate. The catalysed reaction is (12S)-hydroperoxy-(5Z,8Z,10E,14Z)-eicosatetraenoate = (8R)-hydroxy-(11S,12S)-epoxy-(5Z,9E,14Z)-eicosatrienoate. The enzyme catalyses (12S)-hydroperoxy-(5Z,8Z,10E,14Z)-eicosatetraenoate = (10R)-hydroxy-(11S,12S)-epoxy-(5Z,8Z,14Z)-eicosatrienoate. It carries out the reaction (15S)-hydroperoxy-(5Z,8Z,11Z,13E)-eicosatetraenoate = (13R)-hydroxy-(14S,15S)-epoxy-(5Z,8Z,11Z)-eicosatrienoate. It catalyses the reaction (13S)-hydroperoxy-(9Z,11E)-octadecadienoate = 11-hydroxy-(12S,13S)-epoxy-(9Z)-octadecenoate. The catalysed reaction is (5S)-hydroperoxy-(6E,8Z,11Z,14Z)-eicosatetraenoate = 7R-hydroxy-5S,6S-epoxy-(8Z,11Z,14Z)-eicosatrienoate. The enzyme catalyses N-[omega-(9R)-hydroperoxy-(10E,12Z)-octadecadienoyloxy]acyl-beta-D-glucosyl-(1&lt;-&gt;1)-octadecasphing-4E-enine = a N-[omega-(9R,10R)-epoxy-(13R)-hydroxy-(11E)-octadecenoyloxy]acyl-beta-D-glucosyl-(1&lt;-&gt;1)-sphing-4E-enine. It carries out the reaction a N-[omega-(9R)-hydroperoxy-(10E,12Z)-octadecadienoyloxy]-acylsphin-4E-enine = a N-[omega-(9R,10R)-epoxy-(13R)-hydroxy-(11E)-octadecenoyloxy]-acylsphing-4E-enine. It catalyses the reaction a hydroperoxyeicosatetraenoate = an oxoeicosatetraenoate + H2O. The catalysed reaction is (8R)-hydroperoxy-(5Z,9E,11Z,14Z)-eicosatetraenoate = 8-oxo-(5Z,9E,11Z,14Z)-eicosatetraenoate + H2O. The enzyme catalyses (8S)-hydroperoxy-(5Z,9E,11Z,14Z)-eicosatetraenoate = 8-oxo-(5Z,9E,11Z,14Z)-eicosatetraenoate + H2O. It carries out the reaction (12R)-hydroperoxy-(5Z,8Z,10E,14Z)-eicosatetraenoate = 12-oxo-(5Z,8Z,10E,14Z)-eicosatetraenoate + H2O. It catalyses the reaction (12S)-hydroperoxy-(5Z,8Z,10E,14Z)-eicosatetraenoate = 12-oxo-(5Z,8Z,10E,14Z)-eicosatetraenoate + H2O. The catalysed reaction is (15S)-hydroperoxy-(5Z,8Z,11Z,13E)-eicosatetraenoate = 15-oxo-(5Z,8Z,11Z,13E)-eicosatetraenoate + H2O. The enzyme catalyses (13S)-hydroperoxy-(9Z,11E)-octadecadienoate = 13-oxo-(9Z,11E)-octadecadienoate + H2O. It functions in the pathway lipid metabolism; hydroperoxy eicosatetraenoic acid biosynthesis. It participates in lipid metabolism; sphingolipid metabolism. In terms of biological role, non-heme iron-containing lipoxygenase which is atypical in that it displays a prominent hydroperoxide isomerase activity and a reduced lipoxygenases activity. The hydroperoxide isomerase activity catalyzes the isomerization of hydroperoxides, derived from arachidonic and linoleic acid by ALOX12B, into hepoxilin-type epoxyalcohols and ketones. In presence of oxygen, oxygenates polyunsaturated fatty acids, including arachidonic acid, to produce fatty acid hydroperoxides. In the skin, acts downstream of ALOX12B on the linoleate moiety of esterified omega-hydroxyacyl-sphingosine (EOS) ceramides to produce an epoxy-ketone derivative, a crucial step in the conjugation of omega-hydroxyceramide to membrane proteins. Therefore plays a crucial role in the synthesis of corneocytes lipid envelope and the establishment of the skin barrier to water loss. In parallel, it may have a signaling function in barrier formation through the production of hepoxilins metabolites. Also plays a role in adipocyte differentiation through hepoxilin A3 and hepoxilin B3 production which in turn activate PPARG. Through the production of hepoxilins in the spinal cord, it may regulate inflammatory tactile allodynia. This chain is Hydroperoxide isomerase ALOXE3, found in Mus musculus (Mouse).